The sequence spans 344 residues: Ferredoxin--NADP reductase (344 aa).

FAD is bound by residues Asp-36, Gln-44, Tyr-49, Val-89, Phe-127, Asp-291, and Thr-332.

This sequence belongs to the ferredoxin--NADP reductase type 2 family. Homodimer. It depends on FAD as a cofactor.

The catalysed reaction is 2 reduced [2Fe-2S]-[ferredoxin] + NADP(+) + H(+) = 2 oxidized [2Fe-2S]-[ferredoxin] + NADPH. In Beijerinckia indica subsp. indica (strain ATCC 9039 / DSM 1715 / NCIMB 8712), this protein is Ferredoxin--NADP reductase.